Here is a 143-residue protein sequence, read N- to C-terminus: Ribonuclease VapC33 (143 aa).

Asp5 and Asp108 together coordinate Mg(2+).

It belongs to the PINc/VapC protein family. The cofactor is Mg(2+).

Toxic component of a type II toxin-antitoxin (TA) system. An RNase. Its toxic effect is neutralized by coexpression with cognate antitoxin VapB33. This Mycobacterium tuberculosis (strain CDC 1551 / Oshkosh) protein is Ribonuclease VapC33.